A 461-amino-acid polypeptide reads, in one-letter code: 23S rRNA (uracil(1939)-C(5))-methyltransferase RlmD (461 aa).

Residues 1-26 (MAKHERGLRFQPTGGSKAPQIPTGKK) are disordered. The region spanning 20 to 78 (QIPTGKKQRLSIERLANDGRGIAFFEGKTWFVLGALAGEEVEARVLGAHGKVVEARTER) is the TRAM domain. Residues cysteine 91, cysteine 97, cysteine 100, and cysteine 179 each coordinate [4Fe-4S] cluster. Glutamine 283, phenylalanine 312, asparagine 317, glutamate 333, aspartate 360, and aspartate 381 together coordinate S-adenosyl-L-methionine. Cysteine 407 (nucleophile) is an active-site residue.

Belongs to the class I-like SAM-binding methyltransferase superfamily. RNA M5U methyltransferase family. RlmD subfamily.

The catalysed reaction is uridine(1939) in 23S rRNA + S-adenosyl-L-methionine = 5-methyluridine(1939) in 23S rRNA + S-adenosyl-L-homocysteine + H(+). Its function is as follows. Catalyzes the formation of 5-methyl-uridine at position 1939 (m5U1939) in 23S rRNA. This is 23S rRNA (uracil(1939)-C(5))-methyltransferase RlmD from Pseudomonas fluorescens (strain Pf0-1).